A 198-amino-acid polypeptide reads, in one-letter code: Glycerol-3-phosphate acyltransferase (198 aa).

Transmembrane regions (helical) follow at residues 1–21, 50–70, 77–97, 111–131, 136–156, and 157–177; these read MHIL…GFLF, WPAF…VKIA, NLFE…PIWL, MFIA…LIIL, IVSL…FLDI, and GSTN…VIWK.

It belongs to the PlsY family. Probably interacts with PlsX.

It localises to the cell inner membrane. It catalyses the reaction an acyl phosphate + sn-glycerol 3-phosphate = a 1-acyl-sn-glycero-3-phosphate + phosphate. It participates in lipid metabolism; phospholipid metabolism. In terms of biological role, catalyzes the transfer of an acyl group from acyl-phosphate (acyl-PO(4)) to glycerol-3-phosphate (G3P) to form lysophosphatidic acid (LPA). This enzyme utilizes acyl-phosphate as fatty acyl donor, but not acyl-CoA or acyl-ACP. This is Glycerol-3-phosphate acyltransferase from Prochlorococcus marinus subsp. pastoris (strain CCMP1986 / NIES-2087 / MED4).